The primary structure comprises 1086 residues: NAD(P) transhydrogenase, mitochondrial (1086 aa).

Residues 1–43 constitute a mitochondrion transit peptide; sequence MANLLKTVVTGCSCPFLSNLGSCKVLPGKKNFLRAFHTHRILW. The Mitochondrial matrix portion of the chain corresponds to 44–474; the sequence is CKAPVKPGIP…TITPFRKTMT (431 aa). Lys-70 carries the N6-acetyllysine modification. Lys-117 carries the post-translational modification N6-succinyllysine. 182 to 184 is a binding site for NAD(+); the sequence is RVT. Position 224 is an N6-succinyllysine (Lys-224). Residues Val-237, 257 to 259, and Gly-287 contribute to the NAD(+) site; that span reads DTR. At Lys-294 the chain carries N6-succinyllysine. NAD(+) is bound by residues Glu-300 and Leu-319. Lys-331 is modified (N6-succinyllysine). Lys-397 is modified (N6-acetyllysine). The next 4 helical transmembrane spans lie at 475–493, 501–521, 527–546, and 558–578; these read SASVYTAGLTGILGLGIAA, MVTTFGLAGIVGYHTVWGVTP, LMSVTNAISGLTAVGGLVLM, and GLAALATFISSVNIAGGFLVT. Topologically, residues 579–595 are mitochondrial matrix; it reads QRMLDMFKRPTDPPEYN. 5 helical membrane-spanning segments follow: residues 596–616, 622–642, 646–666, 672–691, and 702–722; these read YLYLLPAGTFVGGYLASLYSG, IMYLGSGLCCVGALAGLSTQG, LGNALGMIGVAGGLAATLGGL, LLAQMSGAMALGGTIGLTIA, and LVAAFHSLVGLAAVLTCIAEY. Residues 723 to 739 are Cytoplasmic-facing; it reads IIEYPHFATDAAANLTK. 5 consecutive transmembrane segments (helical) span residues 740–760, 778–797, 801–819, 833–853, and 857–879; these read IVAYLGTYIGGVTFSGSLVAY, HLLNAGLLAASVGGIIPFMM, FTTGITCLGSVSALSAVMG, VVITVLNSYSGWALCAEGFLL, and LLTIVGALIGSSGAILSYIMCVA. Over 880-1086 the chain is Mitochondrial matrix; sequence MNRSLANVIL…QAKVRESYQK (207 aa). NADP(+) is bound by residues Tyr-933, 965–970, 1007–1011, 1026–1027, 1042–1049, and 1068–1069; these read VAGRMP, GANDT, GM, KRSLGVGY, and DA. Lys-1079 carries the post-translational modification N6-succinyllysine.

It in the N-terminal section; belongs to the AlaDH/PNT family. In the C-terminal section; belongs to the PNT beta subunit family. Homodimer.

The protein localises to the mitochondrion inner membrane. It catalyses the reaction NAD(+) + NADPH + H(+)(in) = NADH + NADP(+) + H(+)(out). The transhydrogenation between NADH and NADP is coupled to respiration and ATP hydrolysis and functions as a proton pump across the membrane. May play a role in reactive oxygen species (ROS) detoxification in the adrenal gland. The protein is NAD(P) transhydrogenase, mitochondrial (NNT) of Ovis aries (Sheep).